The sequence spans 927 residues: Clumping factor A (927 aa).

The signal sequence occupies residues 1 to 39 (MNMKKKEKHAIRKKSIGVASVLVGTLIGFGLLSSKEADA). A YSIRK-G/S signaling motif motif is present at residues 9–20 (HAIRKKSIGVAS). Disordered stretches follow at residues 34-200 (SKEA…SNKD) and 529-898 (FNNG…SEDE). The segment at 40 to 542 (SENSVTQSDS…SGSGDGIDKP (503 aa)) is ligand binding A region. The segment covering 47-65 (SDSASNESKSNDSSSVSAA) has biased composition (low complexity). The span at 71 to 105 (TNVSDTKTSSNTNNGETSVAQNPAQQETTQSSSTN) shows a compositional bias: polar residues. Low complexity-rich tracts occupy residues 106–132 (ATTE…ATTQ) and 143–162 (NQTS…SVNS). Residues 163-200 (PQNSTNAENVSTTQDTSTEATPSNNESAPQSTDASNKD) are compositionally biased toward polar residues. Residues 547 to 565 (QPDEPGEIEPIPEDSDSDP) are compositionally biased toward acidic residues. Over residues 566–598 (GSDSGSDSNSDSGSDSGSDSTSDSGSDSASDSD) the composition is skewed to low complexity. The segment covering 599-855 (SASDSDSASD…DSDSESDSNS (257 aa)) has biased composition (acidic residues). Positions 856–867 (DSESVSNNNVVP) are enriched in low complexity. Basic and acidic residues predominate over residues 881-890 (NEAKDSKEPL). The LPXTG sorting signal motif lies at 890–894 (LPDTG). Thr893 bears the Pentaglycyl murein peptidoglycan amidated threonine mark. The propeptide at 894 to 927 (GSEDEANTSLIWGLLASIGSLLLFRRKKENKDKK) is removed by sortase.

The protein belongs to the serine-aspartate repeat-containing protein (SDr) family.

The protein localises to the secreted. It is found in the cell wall. Its function is as follows. Cell surface-associated protein implicated in virulence. Promotes bacterial attachment exclusively to the gamma-chain of human fibrinogen. Induces formation of bacterial clumps, which diminish the ability of group IIA phospholipase A2 to cause bacterial phospholipid hydrolysis and killing. Significantly decreases macrophage phagocytosis possibly thanks to the clumps, clumped bacteria being too large to be phagocytosed. Dominant factor responsible for human platelet aggregation, which may be an important mechanism for initiating infective endocarditis. Enhances spleen cell proliferative response in vitro, contributing significantly to the immunostimulatory activity of S.aureus. The protein is Clumping factor A (clfA) of Staphylococcus aureus (strain NCTC 8325 / PS 47).